The chain runs to 160 residues: Cyclic pyranopterin monophosphate synthase (160 aa).

Substrate is bound by residues 74–76 (LSH) and 112–113 (ME). Residue Asp-127 is part of the active site.

Belongs to the MoaC family. Homohexamer; trimer of dimers.

The enzyme catalyses (8S)-3',8-cyclo-7,8-dihydroguanosine 5'-triphosphate = cyclic pyranopterin phosphate + diphosphate. The protein operates within cofactor biosynthesis; molybdopterin biosynthesis. Catalyzes the conversion of (8S)-3',8-cyclo-7,8-dihydroguanosine 5'-triphosphate to cyclic pyranopterin monophosphate (cPMP). The protein is Cyclic pyranopterin monophosphate synthase of Geobacter sulfurreducens (strain ATCC 51573 / DSM 12127 / PCA).